The sequence spans 491 residues: Maintenance of mitochondrial morphology protein 1 (491 aa).

Over 1–22 (MTFQQNEPSAVPAQSSLSFTQG) the chain is Lumenal. A helical membrane pass occupies residues 23 to 43 (FLLGQLSVVLLIGAFIKFFIF). The Cytoplasmic portion of the chain corresponds to 44-491 (GEAPPPPSRG…GTLPGGAAAN (448 aa)). Disordered stretches follow at residues 50–95 (PSRG…PVPS), 275–325 (PPLH…SPKS), and 392–491 (RTGV…AAAN). Residues 54–64 (LSHRASTHRRS) show a composition bias toward basic residues. Composition is skewed to polar residues over residues 65–78 (NSIY…GTSR) and 85–95 (STSNVLRPVPS). The SMP-LTD domain occupies 131 to 384 (QPESLDWFNV…EPRVQVVGLP (254 aa)). The span at 275–287 (PPLHTPSPSPSPP) shows a compositional bias: pro residues. Composition is skewed to polar residues over residues 300–315 (TNGS…NAQE) and 403–412 (TGSNAASRSA). The span at 422-434 (RADDIGREPDGLR) shows a compositional bias: basic and acidic residues.

The protein belongs to the MMM1 family. As to quaternary structure, homodimer. Component of the ER-mitochondria encounter structure (ERMES) or MDM complex, composed of mmm1, mdm10, mdm12 and mdm34. A mmm1 homodimer associates with one molecule of mdm12 on each side in a pairwise head-to-tail manner, and the SMP-LTD domains of mmm1 and mdm12 generate a continuous hydrophobic tunnel for phospholipid trafficking.

Its subcellular location is the endoplasmic reticulum membrane. Component of the ERMES/MDM complex, which serves as a molecular tether to connect the endoplasmic reticulum (ER) and mitochondria. Components of this complex are involved in the control of mitochondrial shape and protein biogenesis, and function in nonvesicular lipid trafficking between the ER and mitochondria. The mdm12-mmm1 subcomplex functions in the major beta-barrel assembly pathway that is responsible for biogenesis of all outer membrane beta-barrel proteins, and acts in a late step after the SAM complex. The mdm10-mdm12-mmm1 subcomplex further acts in the TOM40-specific pathway after the action of the mdm12-mmm1 complex. Essential for establishing and maintaining the structure of mitochondria and maintenance of mtDNA nucleoids. This chain is Maintenance of mitochondrial morphology protein 1, found in Aspergillus flavus (strain ATCC 200026 / FGSC A1120 / IAM 13836 / NRRL 3357 / JCM 12722 / SRRC 167).